Reading from the N-terminus, the 316-residue chain is Polyprenyl transferase prhE (316 aa).

9 helical membrane passes run 45 to 65 (VVGV…TFLL), 69 to 89 (VILS…NDLI), 114 to 134 (GAAL…LLLP), 135 to 155 (SQCA…PFGK), 163 to 183 (LILT…DMSP), 188 to 208 (IPTL…DIVY), 231 to 253 (ITDQ…GGIL), 257 to 276 (GFPF…LRFL), and 296 to 316 (SCLL…CVRL).

The protein belongs to the UbiA prenyltransferase family. Mg(2+) serves as cofactor.

The protein resides in the membrane. The catalysed reaction is 3,5-dimethylorsellinate + (2E,6E)-farnesyl diphosphate = (3R)-3-farnesyl-6-hydroxy-2,3,5-trimethyl-4-oxocyclohexa-1,5-diene-1-carboxylate + diphosphate + H(+). Its pathway is secondary metabolite biosynthesis; terpenoid biosynthesis. Functionally, polyprenyl transferase; part of the gene cluster that mediates the biosynthesis of paraherquonin, a meroterpenoid with a unique, highly congested hexacyclic molecular architecture. The first step of the pathway is the synthesis of 3,5-dimethylorsellinic acid (DMOA) by the polyketide synthase prhL. Synthesis of DMOA is followed by farnesylation by the prenyltransferase prhE, methylesterification by the methyl-transferase prhM, epoxidation of the prenyl chain by the flavin-dependent monooxygenase prhF, and cyclization of the farnesyl moiety by the terpene cyclase prhH, to yield the tetracyclic intermediate, protoaustinoid A. The short chain dehydrogenase prhI then oxidizes the C-3 alcohol group of the terpene cyclase product to transform protoaustinoid A into protoaustinoid B. The FAD-binding monooxygenase prhJ catalyzes the oxidation of protoaustinoid B into preaustinoid A which is further oxidized into preaustinoid A1 by FAD-binding monooxygenase phrK. Finally, prhA leads to berkeleydione via the berkeleyone B intermediate. PrhA is a multifunctional dioxygenase that first desaturates at C5-C6 to form berkeleyone B, followed by rearrangement of the A/B-ring to form the cycloheptadiene moiety in berkeleydione. Berkeleydione serves as the key intermediate for the biosynthesis of paraherquonin as well as many other meroterpenoids. The cytochrome P450 monooxygenases prhB, prhD, and prhN, as well as the isomerase prhC, are probably involved in the late stage of paraherquonin biosynthesis, after the production of berkeleydione. Especially prhC might be a multifunctional enzyme that catalyzes the D-ring expansion via intramolecular methoxy rearrangement, as well as the hydrolysis of the expanded D-ring. In Penicillium brasilianum, this protein is Polyprenyl transferase prhE.